The sequence spans 231 residues: Potassium/proton antiporter CemA (231 aa).

4 consecutive transmembrane segments (helical) span residues 7 to 27 (FISLLYLASIVFLPWWISLSF), 116 to 136 (IISFVILSVFSILSNEELIFL), 156 to 176 (ILLLTDLCIGFHSPHGWELMI), and 191 to 211 (IISGVVSTFPVILDTIFKYWI).

This sequence belongs to the CemA family.

It is found in the plastid. The protein localises to the chloroplast inner membrane. It catalyses the reaction K(+)(in) + H(+)(out) = K(+)(out) + H(+)(in). Functionally, contributes to K(+)/H(+) antiport activity by supporting proton efflux to control proton extrusion and homeostasis in chloroplasts in a light-dependent manner to modulate photosynthesis. Prevents excessive induction of non-photochemical quenching (NPQ) under continuous-light conditions. Indirectly promotes efficient inorganic carbon uptake into chloroplasts. This is Potassium/proton antiporter CemA from Morus indica (Mulberry).